The chain runs to 507 residues: F-box only protein 31 (507 aa).

A disordered region spans residues 19–42; it reads RQQRRGPAETAAADSEADTDPEEE. Position 33 is a phosphoserine (S33). The span at 33-42 shows a compositional bias: acidic residues; sequence SEADTDPEEE. A Phosphothreonine modification is found at T37. Positions 50-55 match the D box motif; sequence RCSLLE. Residues 50–96 form the F-box domain; that stretch reads RCSLLELPPELLVEIFASLPGTDLPSLAQVCSRFRRILHTDTIWRRR. 4 residues coordinate Zn(2+): C192, H200, C216, and H222. Position 264 is a phosphoserine; by ATM (S264). Positions 283-285 match the DDL motif motif; sequence DDL. A disordered region spans residues 364 to 421; that stretch reads RQEQEAGEGPAPHREPAVKDPEGPPAKASKEAGPGAEAAEQSSTSGQGQPFVLPAGVS. Over residues 374-385 the composition is skewed to basic and acidic residues; sequence APHREPAVKDPE. S448 bears the Phosphoserine mark.

This sequence belongs to the FBXO31 family. As to quaternary structure, part of a SCF (SKP1-cullin-F-box) protein ligase complex SCF(FBXO31) composed of CUL1, SKP1, RBX1 and FBXO31. Interacts (when phosphorylated at Ser-33) with CDC20, promoting ubiquitination by the APC/C complex. Phosphorylation at Ser-264 by ATM following gamma-irradiation results in its stabilization. Phosphorylation at Ser-448 in absence of stress promotes its ubiquitination and degradation by the SCF(FBXO46) complex. Phosphorylation at Ser-33 by AKT1 promotes association with CDC20 and ubiquitination by the APC/C complex. In terms of processing, ubiquitinated by the SCF(FBXO46) complex in absence of stress, promoting its degradation. Ubiquitinated by the APC/C complex following phosphorylation at Ser-33, leading to its degradation by the proteasome.

The protein localises to the cytoplasm. The protein resides in the cytoskeleton. It localises to the microtubule organizing center. Its subcellular location is the centrosome. It functions in the pathway protein modification; protein ubiquitination. Its function is as follows. Substrate-recognition component of the SCF(FBXO31) protein ligase complex, which specifically mediates the ubiquitination of proteins amidated at their C-terminus in response to oxidative stress, leading to their degradation by the proteasome. FBXO31 specifically recognizes and binds C-terminal peptides bearing an amide: C-terminal amidation in response to oxidative stress takes place following protein fragmentation. The SCF(FBXO31) also plays a role in G1 arrest following DNA damage by mediating ubiquitination of phosphorylated cyclin-D1 (CCND1), promoting its degradation by the proteasome, resulting in G1 arrest. The SCF(FBXO31) complex is however not a major regulator of CCND1 stability during the G1/S transition. In response to genotoxic stress, the SCF(FBXO31) complex directs ubiquitination and degradation of phosphorylated MDM2, thereby promoting p53/TP53-mediated DNA damage response. SCF(FBXO31) complex is required for genomic integrity by catalyzing ubiquitination and degradation of cyclin-A (CCNA1 and/or CCNA2) during the G1 phase. In response to genotoxic stress, the SCF(FBXO31) complex directs ubiquitination and degradation of phosphorylated FBXO46 and MAP2K6. SCF(FBXO31) complex promotes ubiquitination and degradation of CDT1 during the G2 phase to prevent re-replication. The SCF(FBXO31) complex also mediates ubiquitination and degradation of DUSP6, OGT and PARD6A. This Rattus norvegicus (Rat) protein is F-box only protein 31.